The chain runs to 323 residues: Beta-ketoacyl-[acyl-carrier-protein] synthase III (323 aa).

Active-site residues include Cys-113 and His-250. Positions 251 to 255 are ACP-binding; that stretch reads QANKR. Residue Asn-280 is part of the active site.

The protein belongs to the thiolase-like superfamily. FabH family. Homodimer.

It localises to the cytoplasm. It carries out the reaction malonyl-[ACP] + acetyl-CoA + H(+) = 3-oxobutanoyl-[ACP] + CO2 + CoA. It participates in lipid metabolism; fatty acid biosynthesis. Catalyzes the condensation reaction of fatty acid synthesis by the addition to an acyl acceptor of two carbons from malonyl-ACP. Catalyzes the first condensation reaction which initiates fatty acid synthesis and may therefore play a role in governing the total rate of fatty acid production. Possesses both acetoacetyl-ACP synthase and acetyl transacylase activities. Its substrate specificity determines the biosynthesis of branched-chain and/or straight-chain of fatty acids. The sequence is that of Beta-ketoacyl-[acyl-carrier-protein] synthase III from Brucella canis (strain ATCC 23365 / NCTC 10854 / RM-666).